The primary structure comprises 499 residues: MDTSPLCFSILLVLCIFIQSSALGQSLKPEPFGRRAQAVETNKTLHEMKTRFLLFGETNQGCQIRINHPDTLQECGFNSSLPLVMIIHGWSVDGVLENWIWQMVAALKSQPAQPVNVGLVDWITLAHDHYTIAVRNTRLVGKEVAALLRWLEESVQLSRSHVHLIGYSLGAHVSGFAGSSIGGTHKIGRITGLDAAGPLFEGSAPSNRLSPDDANFVDAIHTFTREHMGLSVGIKQPIGHYDFYPNGGSFQPGCHFLELYRHIAQHGFNAITQTIKCSHERSVHLFIDSLLHAGTQSMAYPCGDMNSFSQGLCLSCKKGRCNTLGYHVRQEPRSKSKRLFLVTRAQSPFKVYHYQFKIQFINQTETPIQTTFTMSLLGTKEKMQKIPITLGKGIASNKTYSFLITLDVDIGELIMIKFKWENSAVWANVWDTVQTIIPWSTGPRHSGLVLKTIRVKAGETQQRMTFCSENTDDLLLRPTQEKIFVKCEIKSKTSKRKIR.

The first 22 residues, 1–22, serve as a signal peptide directing secretion; that stretch reads MDTSPLCFSILLVLCIFIQSSA. N-linked (GlcNAc...) asparagine glycans are attached at residues Asn42 and Asn78. The active-site Nucleophile is Ser168. Asp194 (charge relay system) is an active-site residue. The interval 254-277 is essential for determining substrate specificity; sequence CHFLELYRHIAQHGFNAITQTIKC. His279 acts as the Charge relay system in catalysis. In terms of domain architecture, PLAT spans 352–486; the sequence is YHYQFKIQFI…RPTQEKIFVK (135 aa). Residues Asn362 and Asn397 are each glycosylated (N-linked (GlcNAc...) asparagine).

It belongs to the AB hydrolase superfamily. Lipase family. As to quaternary structure, homodimer.

The protein localises to the secreted. The catalysed reaction is a triacylglycerol + H2O = a diacylglycerol + a fatty acid + H(+). It carries out the reaction a 1-acyl-sn-glycero-3-phosphocholine + H2O = sn-glycerol 3-phosphocholine + a fatty acid + H(+). It catalyses the reaction a 1,2-diacyl-sn-glycero-3-phosphocholine + H2O = a 2-acyl-sn-glycero-3-phosphocholine + a fatty acid + H(+). The enzyme catalyses 1,2,3-tri-(9Z-octadecenoyl)-glycerol + H2O = di-(9Z)-octadecenoylglycerol + (9Z)-octadecenoate + H(+). The catalysed reaction is 1,2-di-(9Z-octadecenoyl)-sn-glycero-3-phosphocholine + H2O = (9Z-octadecenoyl)-sn-glycero-3-phosphocholine + (9Z)-octadecenoate + H(+). It carries out the reaction 1,2,3-tributanoylglycerol + H2O = dibutanoylglycerol + butanoate + H(+). It catalyses the reaction 1,2-dihexadecanoyl-sn-glycero-3-phosphocholine + H2O = hexadecanoyl-sn-glycero-3-phosphocholine + hexadecanoate + H(+). The enzyme catalyses 1,2-di-(9Z-octadecenoyl)-sn-glycerol + H2O = 2-(9Z-octadecenoyl)-glycerol + (9Z)-octadecenoate + H(+). The catalysed reaction is 1,2,3-tri-(9Z-octadecenoyl)-glycerol + H2O = 2,3-di-(9Z)-octadecenoyl-sn-glycerol + (9Z)-octadecenoate + H(+). It carries out the reaction 1-(9Z-octadecenoyl)-sn-glycero-3-phospho-L-serine + H2O = sn-glycero-3-phospho-L-serine + (9Z)-octadecenoate + H(+). It catalyses the reaction 1-hexadecanoyl-sn-glycero-3-phosphocholine + H2O = sn-glycerol 3-phosphocholine + hexadecanoate + H(+). The enzyme catalyses 1,3-di-(9Z-octadecenoyl)-glycerol + H2O = 3-(9Z-octadecenoyl)-sn-glycerol + (9Z)-octadecenoate + H(+). Phospholipase A1 and triacylglycerol lipase are inhibited by sphingomyelin. Catalyzes the hydrolysis of triglycerides and phospholipids present in circulating plasma lipoproteins, including chylomicrons, intermediate density lipoproteins (IDL), low density lipoproteins (LDL) of large size and high density lipoproteins (HDL), releasing free fatty acids (FFA) and smaller lipoprotein particles. Also exhibits lysophospholipase activity. Can hydrolyze both neutral lipid and phospholipid substrates but shows a greater binding affinity for neutral lipid substrates than phospholipid substrates. In native LDL, preferentially hydrolyzes the phosphatidylcholine species containing polyunsaturated fatty acids at sn-2 position. In Homo sapiens (Human), this protein is Hepatic triacylglycerol lipase (LIPC).